A 383-amino-acid chain; its full sequence is Beta-1,3-galactosyltransferase 4 (383 aa).

The Cytoplasmic portion of the chain corresponds to 1–8; it reads MPLSLFRR. The helical transmembrane segment at 9 to 29 threads the bilayer; sequence LLLAALLLVIIWTLFGPSGIG. The Lumenal segment spans residues 30-383; sequence EELLSLSLAS…RCRVIAWLHS (354 aa). N-linked (GlcNAc...) asparagine glycosylation is present at N149.

This sequence belongs to the glycosyltransferase 31 family.

The protein resides in the golgi apparatus membrane. The enzyme catalyses a ganglioside GM2 (d18:1(4E)) + UDP-alpha-D-galactose = a ganglioside GM1 (d18:1(4E)) + UDP + H(+). It carries out the reaction a ganglioside GM2 + UDP-alpha-D-galactose = a ganglioside GM1 + UDP + H(+). It catalyses the reaction a ganglioside GD2 (d18:1(4E)) + UDP-alpha-D-galactose = a ganglioside GD1b (d18:1(4E)) + UDP + H(+). The catalysed reaction is a ganglioside GA2 (d18:1(4E)) + UDP-alpha-D-galactose = a ganglioside GA1 (d18:1(4E)) + UDP + H(+). It functions in the pathway protein modification; protein glycosylation. In terms of biological role, involved in GM1/GD1B/GA1 ganglioside biosynthesis. The polypeptide is Beta-1,3-galactosyltransferase 4 (B3GALT4) (Canis lupus familiaris (Dog)).